Consider the following 464-residue polypeptide: UDP-glycosyltransferase 76F2 (464 aa).

UDP-alpha-D-glucose is bound by residues serine 279, 338–340, 355–363, and 377–380; these read VNQ, HCGWNSTIE, and FSDQ.

Belongs to the UDP-glycosyltransferase family.

This is UDP-glycosyltransferase 76F2 (UGT76F2) from Arabidopsis thaliana (Mouse-ear cress).